A 184-amino-acid polypeptide reads, in one-letter code: Photosystem I assembly protein Ycf4 (184 aa).

The next 2 membrane-spanning stretches (helical) occupy residues 22–42 (LCWA…GFSS) and 64–84 (IVMC…WCTI).

Belongs to the Ycf4 family.

Its subcellular location is the plastid. It localises to the chloroplast thylakoid membrane. Seems to be required for the assembly of the photosystem I complex. This is Photosystem I assembly protein Ycf4 from Angiopteris evecta (Mule's foot fern).